A 108-amino-acid chain; its full sequence is uncharacterized protein (108 aa).

Low complexity predominate over residues 39 to 68 (GLRSRSGTGSGNSRNGLKESGGSRSGPGKP). The disordered stretch occupies residues 39–95 (GLRSRSGTGSGNSRNGLKESGGSRSGPGKPRGNRKSSRRIRPRPTSEKPRGYWRSSW). The segment covering 69-80 (RGNRKSSRRIRP) has biased composition (basic residues).

This is an uncharacterized protein from Acidithiobacillus ferridurans.